The primary structure comprises 362 residues: MPGKQSEDRPMEVAAVEDGGDEGLGGLTVEELQQGQEAALALEDMMALSAQTLVRTEVEELYEEVRPLGQGRFGRVLLVTHRQKGTPLALKQLPKHSTSLRSFLYEFCVGLSLGTHPAIVAAYGIGIESANSYSFLTEPVLHGDLITFIKPKVGLPQPAVQRCAAQLASALEHIHSHGLVYRDLKPENVLVCDPACQRVKLTDFGHTRPRGTMLRLTGPPIPYTAPELCAPPPLPEGLPIQPALDAWALGVLIFCLLTGYFPWDQPLVEVDPFFEDFLIWQASGQPQDRPQPWYNLSPAADTLLWGLLDPHPRKRNPVSSIKSYLGQPWKQREEGAEELTKELREDGSRGGQEAAKGEQPAC.

Over residues 1–11 the composition is skewed to basic and acidic residues; that stretch reads MPGKQSEDRPM. Residues 1 to 20 form a disordered region; that stretch reads MPGKQSEDRPMEVAAVEDGG. Residues 62-330 enclose the Protein kinase domain; the sequence is YEEVRPLGQG…IKSYLGQPWK (269 aa). Residues 68–76 and Lys91 contribute to the ATP site; that span reads LGQGRFGRV. Catalysis depends on Asp183, which acts as the Proton acceptor. Positions 317 to 362 are disordered; it reads PVSSIKSYLGQPWKQREEGAEELTKELREDGSRGGQEAAKGEQPAC. The segment covering 330 to 348 has biased composition (basic and acidic residues); the sequence is KQREEGAEELTKELREDGS.

The protein belongs to the protein kinase superfamily. Ser/Thr protein kinase family. STKL subfamily.

It catalyses the reaction L-seryl-[protein] + ATP = O-phospho-L-seryl-[protein] + ADP + H(+). It carries out the reaction L-threonyl-[protein] + ATP = O-phospho-L-threonyl-[protein] + ADP + H(+). The protein is Serine/threonine-protein kinase SBK2 (Sbk2) of Rattus norvegicus (Rat).